A 629-amino-acid polypeptide reads, in one-letter code: tRNA uridine 5-carboxymethylaminomethyl modification enzyme MnmG (629 aa).

Residues 13–18 (GGGHAG), Val125, and Ser180 each bind FAD. 273–287 (GPRYCPSIEDKVMRF) contacts NAD(+). Position 370 (Gln370) interacts with FAD.

This sequence belongs to the MnmG family. As to quaternary structure, homodimer. Heterotetramer of two MnmE and two MnmG subunits. FAD serves as cofactor.

The protein resides in the cytoplasm. NAD-binding protein involved in the addition of a carboxymethylaminomethyl (cmnm) group at the wobble position (U34) of certain tRNAs, forming tRNA-cmnm(5)s(2)U34. This is tRNA uridine 5-carboxymethylaminomethyl modification enzyme MnmG from Citrobacter koseri (strain ATCC BAA-895 / CDC 4225-83 / SGSC4696).